The sequence spans 279 residues: MAFQGTSRTLTQQSSAASSDDLQKILFSPDAIKKMATECDLGRHHWMRADNAISVRPLVPQVTSNNLLSFFKSGYDAGELRSKGYMSVPQVLCAVTRTVSTDAEGSLKIYLADLGDKELSPIDGQCVTLHNHELPALISFQPTYDCPMELVANRHRCFAVVVERHGYIGYGGTTASVCSNWQAQFSSKNNNYTHAAAGKTLVLPYNRLAEHSKPSAVARLLKSQLNNVSSSRYLLPNVALNQNASGHESEILNESPPIAIGSPSASRNNSFRSQVVNGL.

A compositionally biased stretch (low complexity) spans 256 to 266 (PPIAIGSPSAS). The disordered stretch occupies residues 256 to 279 (PPIAIGSPSASRNNSFRSQVVNGL). Positions 267-279 (RNNSFRSQVVNGL) are enriched in polar residues.

The protein belongs to the cucumovirus movement protein family.

The protein localises to the host cell junction. It localises to the host plasmodesma. Transports viral genome to neighboring plant cells directly through plasmosdesmata, without any budding. The movement protein allows efficient cell to cell propagation, by bypassing the host cell wall barrier. Acts by forming a tubular structure at the host plasmodesmata, enlarging it enough to allow free passage of virion capsids. The protein is Movement protein of Cucumis sativus (Cucumber).